The primary structure comprises 320 residues: Malate dehydrogenase (320 aa).

Residues 10-15 (GAGMIG) and Asp-34 contribute to the NAD(+) site. Substrate contacts are provided by Arg-83 and Arg-89. NAD(+) contacts are provided by residues Asn-96 and 119–121 (ITN). Substrate is bound by residues Asn-121 and Arg-152. His-176 functions as the Proton acceptor in the catalytic mechanism.

Belongs to the LDH/MDH superfamily. MDH type 3 family.

The enzyme catalyses (S)-malate + NAD(+) = oxaloacetate + NADH + H(+). In terms of biological role, catalyzes the reversible oxidation of malate to oxaloacetate. This chain is Malate dehydrogenase, found in Caulobacter sp. (strain K31).